We begin with the raw amino-acid sequence, 570 residues long: Pre-mRNA 3'-end-processing factor FIP1 (570 aa).

Residues 1 to 10 (MSAEEADKTT) show a composition bias toward basic and acidic residues. The interval 1 to 107 (MSAEEADKTT…SDDDDDDVRV (107 aa)) is disordered. Residues 16–38 (AGDEEEEWLYGDEGESKETEEEE) are compositionally biased toward acidic residues. A compositionally biased stretch (low complexity) spans 56-77 (DAPTTTNNSSDSATPPTTTTTT). The span at 87–104 (APGEDEDSESDSDDDDDD) shows a compositional bias: acidic residues. Thr-125 carries the post-translational modification Phosphothreonine. A Phosphoserine modification is found at Ser-247. Disordered stretches follow at residues 300–328 (RRRHNLEGNNIQVISEHSSSEVEPEVQKM), 371–400 (PNFPPPTGGPPPSLIPTLDNSGHPGGYDGR), and 418–570 (GAVN…EAME). The segment covering 371–384 (PNFPPPTGGPPPSL) has biased composition (pro residues). Composition is skewed to basic and acidic residues over residues 436 to 462 (YPRRDKEREKERERERQRDRGHERDHS) and 476 to 506 (DEERYRSYRDYGDRGYERHRERASREKEERH). Basic residues-rich tracts occupy residues 520-529 (KSSRSSSRRR) and 538-548 (HRRHKHKKSKR). The span at 549 to 562 (SKEGKEPSEERSAD) shows a compositional bias: basic and acidic residues.

Belongs to the FIP1 family.

It is found in the nucleus. In terms of biological role, involved in mRNA processing. This is Pre-mRNA 3'-end-processing factor FIP1 (fip1l1) from Danio rerio (Zebrafish).